The following is a 228-amino-acid chain: MPTLVLIRHGQSAWNLENRFTGWWDVNLTDQGIAEAKAAGELMAAKGLDFDQCYTSFQTRAIKTLNIALEAMGRLWLPVEKDWRLNERHYGGLTGLNKAETAARHGDAQVKVWRRSFDIPPPVLEPGGEFDLSKDRRYAGIAIPSTESLKDTIARVLPYWEERIAPDLKAGKRVVISAHGNSLRALVKHLSHIPDDEITELEIPTGQPIVYELADDLTARDRYYLSER.

Residues 8-15 (RHGQSAWN), 21-22 (TG), R60, 87-90 (ERHY), K98, 114-115 (RR), and 180-181 (GN) contribute to the substrate site. The active-site Tele-phosphohistidine intermediate is H9. The active-site Proton donor/acceptor is the E87.

This sequence belongs to the phosphoglycerate mutase family. BPG-dependent PGAM subfamily. In terms of assembly, homodimer.

It catalyses the reaction (2R)-2-phosphoglycerate = (2R)-3-phosphoglycerate. Its pathway is carbohydrate degradation; glycolysis; pyruvate from D-glyceraldehyde 3-phosphate: step 3/5. Catalyzes the interconversion of 2-phosphoglycerate and 3-phosphoglycerate. The protein is 2,3-bisphosphoglycerate-dependent phosphoglycerate mutase of Rhizorhabdus wittichii (strain DSM 6014 / CCUG 31198 / JCM 15750 / NBRC 105917 / EY 4224 / RW1) (Sphingomonas wittichii).